We begin with the raw amino-acid sequence, 727 residues long: Glycerol-3-phosphate dehydrogenase, mitochondrial (727 aa).

The transit peptide at 1–42 (MAFQKAVKGTILVGGGALATVLGLSPFAHYRRKQVSLAYVEA) directs the protein to the mitochondrion. FAD is bound at residue 71-99 (DILVIGGGATGCGCALDAVTRGLKTALVE). Tyr601 carries the post-translational modification Phosphotyrosine. 2 EF-hand domains span residues 623-658 (SDIDRYKKRFHKFDEDEKGFITIVDVQRVLESINVQ) and 659-694 (MDENTLHEILCEVDLNKNGQVELHEFLQLMSAVQKG). Asp672, Asn674, Asn676, Gln678, and Glu683 together coordinate Ca(2+).

Belongs to the FAD-dependent glycerol-3-phosphate dehydrogenase family. Requires FAD as cofactor.

It is found in the mitochondrion inner membrane. It carries out the reaction a quinone + sn-glycerol 3-phosphate = dihydroxyacetone phosphate + a quinol. It functions in the pathway polyol metabolism; glycerol degradation via glycerol kinase pathway; glycerone phosphate from sn-glycerol 3-phosphate (anaerobic route): step 1/1. Calcium-binding enhance the activity of the enzyme. Calcium-responsive mitochondrial glycerol-3-phosphate dehydrogenase which seems to be a key component of the pancreatic beta-cell glucose-sensing device. This chain is Glycerol-3-phosphate dehydrogenase, mitochondrial, found in Mus musculus (Mouse).